Here is a 356-residue protein sequence, read N- to C-terminus: Phosphoribosyl pyrophosphate synthase-associated protein 1 (356 aa).

Position 1 is an N-acetylmethionine (methionine 1). Asparagine 2 is subject to N-acetylproline. Phosphoserine is present on residues serine 177 and serine 215.

It belongs to the ribose-phosphate pyrophosphokinase family. As to quaternary structure, binds to PRPS1 and PRPS2. As to expression, ubiquitous.

Functionally, seems to play a negative regulatory role in 5-phosphoribose 1-diphosphate synthesis. The sequence is that of Phosphoribosyl pyrophosphate synthase-associated protein 1 (PRPSAP1) from Homo sapiens (Human).